The primary structure comprises 295 residues: Acetylglutamate kinase (295 aa).

Substrate is bound by residues 70–71 (GG), Arg92, and Asn191.

Belongs to the acetylglutamate kinase family. ArgB subfamily.

Its subcellular location is the cytoplasm. The enzyme catalyses N-acetyl-L-glutamate + ATP = N-acetyl-L-glutamyl 5-phosphate + ADP. Its pathway is amino-acid biosynthesis; L-arginine biosynthesis; N(2)-acetyl-L-ornithine from L-glutamate: step 2/4. In terms of biological role, catalyzes the ATP-dependent phosphorylation of N-acetyl-L-glutamate. In Mycolicibacterium paratuberculosis (strain ATCC BAA-968 / K-10) (Mycobacterium paratuberculosis), this protein is Acetylglutamate kinase.